The chain runs to 280 residues: Ribosomal RNA small subunit methyltransferase A (280 aa).

S-adenosyl-L-methionine is bound by residues His15, Leu17, Gly42, Glu64, Asp89, and Asn109.

It belongs to the class I-like SAM-binding methyltransferase superfamily. rRNA adenine N(6)-methyltransferase family. RsmA subfamily.

It localises to the cytoplasm. It catalyses the reaction adenosine(1518)/adenosine(1519) in 16S rRNA + 4 S-adenosyl-L-methionine = N(6)-dimethyladenosine(1518)/N(6)-dimethyladenosine(1519) in 16S rRNA + 4 S-adenosyl-L-homocysteine + 4 H(+). In terms of biological role, specifically dimethylates two adjacent adenosines (A1518 and A1519) in the loop of a conserved hairpin near the 3'-end of 16S rRNA in the 30S particle. May play a critical role in biogenesis of 30S subunits. The protein is Ribosomal RNA small subunit methyltransferase A of Synechococcus sp. (strain WH7803).